The sequence spans 494 residues: uncharacterized protein (494 aa).

VOC domains follow at residues 18 to 174 and 229 to 408; these read FIDC…FINR and SLDH…FGIL. His232, His349, and Glu460 together coordinate Fe cation.

This sequence belongs to the 4HPPD family. The cofactor is Fe cation.

Functionally, may have dioxygenase activity. This is an uncharacterized protein from Dictyostelium discoideum (Social amoeba).